The following is a 446-amino-acid chain: GTPase Der (446 aa).

2 EngA-type G domains span residues 3–167 (PVLA…AFDE) and 180–353 (IRLA…ASAT). GTP is bound by residues 9 to 16 (GRPNVGKS), 56 to 60 (DTGGF), 119 to 122 (NKAE), 186 to 193 (GRPNVGKS), 233 to 237 (DTAGL), and 298 to 301 (NKWD). Residues 354–438 (KKLATPVLTR…PMRIEMKSSR (85 aa)) form the KH-like domain.

This sequence belongs to the TRAFAC class TrmE-Era-EngA-EngB-Septin-like GTPase superfamily. EngA (Der) GTPase family. In terms of assembly, associates with the 50S ribosomal subunit.

In terms of biological role, GTPase that plays an essential role in the late steps of ribosome biogenesis. This Methylibium petroleiphilum (strain ATCC BAA-1232 / LMG 22953 / PM1) protein is GTPase Der.